The primary structure comprises 871 residues: Metabotropic glutamate receptor 6 (871 aa).

The first 23 residues, 1 to 23 (MGRLPVLLLWLAWWLSQAGIACG), serve as a signal peptide directing secretion. At 24–579 (AGSVRLAGGL…VVRLTWSSPW (556 aa)) the chain is on the extracellular side. Cys-51 and Cys-93 form a disulfide bridge. Residues Ser-148, 169-171 (AST), and Tyr-219 each bind L-glutamate. 7 disulfides stabilise this stretch: Cys-238-Cys-530, Cys-361-Cys-377, Cys-417-Cys-424, Cys-512-Cys-531, Cys-516-Cys-534, Cys-537-Cys-549, and Cys-552-Cys-565. Asn-290 is a glycosylation site (N-linked (GlcNAc...) asparagine). An L-glutamate-binding site is contributed by Asp-301. Lys-394 lines the L-glutamate pocket. Asn-445 and Asn-473 each carry an N-linked (GlcNAc...) asparagine glycan. N-linked (GlcNAc...) asparagine glycosylation occurs at Asn-561. A helical membrane pass occupies residues 580–602 (AALPLLLAVLGIMATTTIMATFM). Residues 603-616 (RHNDTPIVRASGRE) lie on the Cytoplasmic side of the membrane. Residues 617–637 (LSYVLLTGIFLIYAITFLMVA) traverse the membrane as a helical segment. The Extracellular portion of the chain corresponds to 638-648 (EPCAAICAARR). The chain crosses the membrane as a helical span at residues 649–667 (LLLGLGTTLSYSALLTKTN). Residues 668-691 (RIYRIFEQGKRSVTPPPFISPTSQ) lie on the Cytoplasmic side of the membrane. The chain crosses the membrane as a helical span at residues 692–712 (LVITFGLTSLQVVGVIAWLGA). The Extracellular portion of the chain corresponds to 713-742 (QPPHSVIDYEEQRTVDPEQARGVLKCDMSD). A helical membrane pass occupies residues 743–764 (LSLIGCLGYSLLLMVTCTVYAI). The Cytoplasmic portion of the chain corresponds to 765-777 (KARGVPETFNEAK). Residues 778–800 (PIGFTMYTTCIIWLAFVPIFFGT) form a helical membrane-spanning segment. Residues 801–813 (AQSAEKIYIQTTT) lie on the Extracellular side of the membrane. A helical transmembrane segment spans residues 814-839 (LTVSLSLSASVSLGMLYVPKTYVILF). At 840 to 871 (HPEQNVQKRKRSLKKTSTMAAPPQNENAEDAK) the chain is on the cytoplasmic side. The disordered stretch occupies residues 850–871 (RSLKKTSTMAAPPQNENAEDAK).

This sequence belongs to the G-protein coupled receptor 3 family. Homodimer. Interacts with GPR179. Interacts with photoreceptor synaptic protein LRIT1 (via its N-terminal extracellular domain). Restricted expression in the inner nuclear layer of the retina.

The protein localises to the cell membrane. Its subcellular location is the endoplasmic reticulum membrane. It is found in the golgi apparatus membrane. The protein resides in the cell projection. It localises to the dendrite. Its function is as follows. G-protein coupled receptor for glutamate. Ligand binding causes a conformation change that triggers signaling via guanine nucleotide-binding proteins (G proteins) and modulates the activity of down-stream effectors, such as adenylate cyclase. Signaling inhibits adenylate cyclase activity. Signaling stimulates TRPM1 channel activity and Ca(2+) uptake. Required for normal vision. This chain is Metabotropic glutamate receptor 6 (Grm6), found in Rattus norvegicus (Rat).